The following is a 284-amino-acid chain: 1D-myo-inositol 2-acetamido-2-deoxy-alpha-D-glucopyranoside deacetylase (284 aa).

His-12, Asp-15, and His-146 together coordinate Zn(2+).

This sequence belongs to the MshB deacetylase family. Zn(2+) serves as cofactor.

The enzyme catalyses 1D-myo-inositol 2-acetamido-2-deoxy-alpha-D-glucopyranoside + H2O = 1D-myo-inositol 2-amino-2-deoxy-alpha-D-glucopyranoside + acetate. Catalyzes the deacetylation of 1D-myo-inositol 2-acetamido-2-deoxy-alpha-D-glucopyranoside (GlcNAc-Ins) in the mycothiol biosynthesis pathway. This Mycolicibacterium vanbaalenii (strain DSM 7251 / JCM 13017 / BCRC 16820 / KCTC 9966 / NRRL B-24157 / PYR-1) (Mycobacterium vanbaalenii) protein is 1D-myo-inositol 2-acetamido-2-deoxy-alpha-D-glucopyranoside deacetylase.